The sequence spans 442 residues: Protein PHYTOCHROME KINASE SUBSTRATE 2 (442 aa).

The disordered stretch occupies residues 110 to 130; the sequence is IFVGPKQSSKNSSETPSLRSE. Over residues 121–130 the composition is skewed to low complexity; the sequence is SSETPSLRSE. A phosphoserine mark is found at Ser239 and Ser245. The disordered stretch occupies residues 394-442; the sequence is VSGDSYTSMNRTPSYVPRFPVEANPTSTETRRRISSSSVSHTQSPFLYT. Residues 397–406 show a composition bias toward polar residues; sequence DSYTSMNRTP. A compositionally biased stretch (low complexity) spans 428 to 442; that stretch reads SSSSVSHTQSPFLYT.

This sequence belongs to the PKS family. In terms of assembly, interacts with PKS1, RPT3, PHOT1 and PHOT2. Expressed in leaves, with the strongest expression on edges of the laminas. Not found in roots.

It is found in the cell membrane. Its function is as follows. Acts predominantly in the phot1 pathway. Involved in the leaf positioning and also in the phot2 pathway controlling the leaf flattening. Component of the network that modulates the very low-fluence response (VLFR) branch of phyA signaling. Regulates phytochrome-mediated photomorphogenesis and hypocotyl phototropism. May act by controlling auxin homeostasis. The sequence is that of Protein PHYTOCHROME KINASE SUBSTRATE 2 (PKS2) from Arabidopsis thaliana (Mouse-ear cress).